The chain runs to 223 residues: Small ribosomal subunit protein uS5 (223 aa).

Positions 1–66 are disordered; the sequence is MPPQQQRGRG…AERAQAETEF (66 aa). The segment covering 13–22 has biased composition (gly residues); it reads RGPGGPGGPG. The span at 53 to 66 shows a compositional bias: basic and acidic residues; the sequence is GGDKAERAQAETEF. The region spanning 66 to 129 is the S5 DRBM domain; that stretch reads FQERVVQIRR…SDARKALIRV (64 aa).

Belongs to the universal ribosomal protein uS5 family. As to quaternary structure, part of the 30S ribosomal subunit. Contacts proteins S4 and S8.

Its function is as follows. With S4 and S12 plays an important role in translational accuracy. In terms of biological role, located at the back of the 30S subunit body where it stabilizes the conformation of the head with respect to the body. In Gloeobacter violaceus (strain ATCC 29082 / PCC 7421), this protein is Small ribosomal subunit protein uS5.